The chain runs to 69 residues: Putative membrane protein insertion efficiency factor (69 aa).

Belongs to the UPF0161 family.

The protein resides in the cell membrane. Functionally, could be involved in insertion of integral membrane proteins into the membrane. This Clostridium beijerinckii (strain ATCC 51743 / NCIMB 8052) (Clostridium acetobutylicum) protein is Putative membrane protein insertion efficiency factor.